The sequence spans 367 residues: Alanine racemase (367 aa).

The Proton acceptor; specific for D-alanine role is filled by K40. K40 is subject to N6-(pyridoxal phosphate)lysine. Substrate is bound at residue R136. Residue Y263 is the Proton acceptor; specific for L-alanine of the active site. Residue M310 coordinates substrate.

The protein belongs to the alanine racemase family. Pyridoxal 5'-phosphate is required as a cofactor.

The enzyme catalyses L-alanine = D-alanine. It participates in amino-acid biosynthesis; D-alanine biosynthesis; D-alanine from L-alanine: step 1/1. Catalyzes the interconversion of L-alanine and D-alanine. May also act on other amino acids. This chain is Alanine racemase (alr), found in Streptococcus pneumoniae (strain ATCC 700669 / Spain 23F-1).